The sequence spans 400 residues: Putative cytochrome P450 141 (400 aa).

The next 2 helical transmembrane spans lie at 225–245 (VVGM…AVIT) and 294–314 (VVIA…ITSA). Residue Cys-346 coordinates heme.

Belongs to the cytochrome P450 family. Heme serves as cofactor.

The protein resides in the cell membrane. The protein is Putative cytochrome P450 141 (cyp141) of Mycobacterium tuberculosis (strain CDC 1551 / Oshkosh).